Reading from the N-terminus, the 1171-residue chain is Myosin-B/C (1171 aa).

The Myosin motor domain maps to 105-780 (ETVDDIGYLP…AAKELSILQR (676 aa)). ATP is bound at residue 199–206 (GESGAGKT). Positions 671-681 (AHFIRCLKPNE) are actin-binding. Residues 810 to 1171 (IHFLTRLESN…CFEACAPDRP (362 aa)) form a tail region.

The protein belongs to the TRAFAC class myosin-kinesin ATPase superfamily. Myosin family.

The protein resides in the cytoplasm. In terms of biological role, myosins are actin-based motor molecules with ATPase activity. Unconventional myosins serve in intracellular movements. Their highly divergent tails are presumed to bind to membranous compartments, which would be moved relative to actin filaments. Plays a role in proper daughter cell budding and separation. In Toxoplasma gondii, this protein is Myosin-B/C.